The following is a 117-amino-acid chain: Cell division protein FtsL (117 aa).

Topologically, residues 1–35 are cytoplasmic; the sequence is MSNLAYQPEKQQRHAISPEKKVIVKKRASITLGEK. The helical transmembrane segment at 36-56 threads the bilayer; that stretch reads VLLVLFAAAVLSVSLLIVSKA. The Extracellular segment spans residues 57–117; that stretch reads YAAYQTNIEV…KDKKVKNIQE (61 aa).

The protein belongs to the FtsL family. As to quaternary structure, monomer. Interacts with DivIB and DivIC. Interaction with DivIC stabilizes FtsL against RasP cleavage. In terms of processing, cleaved by RasP. Cleavage is important for turnover and function of FtsL.

It is found in the cell membrane. Functionally, essential cell division protein that may play a structural role. Probably involved in the regulation of the timing of cell division. Also required for sporulation. In Bacillus subtilis (strain 168), this protein is Cell division protein FtsL.